The sequence spans 336 residues: Homoserine O-acetyltransferase (336 aa).

The region spanning 58-321 (AILVLHALTG…PHGHDAFLID (264 aa)) is the AB hydrolase-1 domain. S147 acts as the Nucleophile in catalysis. R204 is a binding site for substrate. Active-site residues include D286 and H315. D316 lines the substrate pocket.

The protein belongs to the AB hydrolase superfamily. MetX family. In terms of assembly, homodimer.

The protein resides in the cytoplasm. It catalyses the reaction L-homoserine + acetyl-CoA = O-acetyl-L-homoserine + CoA. It functions in the pathway amino-acid biosynthesis; L-methionine biosynthesis via de novo pathway; O-acetyl-L-homoserine from L-homoserine: step 1/1. Its function is as follows. Transfers an acetyl group from acetyl-CoA to L-homoserine, forming acetyl-L-homoserine. The polypeptide is Homoserine O-acetyltransferase (Deinococcus geothermalis (strain DSM 11300 / CIP 105573 / AG-3a)).